Reading from the N-terminus, the 475-residue chain is Aspartyl/glutamyl-tRNA(Asn/Gln) amidotransferase subunit B (475 aa).

It belongs to the GatB/GatE family. GatB subfamily. Heterotrimer of A, B and C subunits.

It catalyses the reaction L-glutamyl-tRNA(Gln) + L-glutamine + ATP + H2O = L-glutaminyl-tRNA(Gln) + L-glutamate + ADP + phosphate + H(+). The enzyme catalyses L-aspartyl-tRNA(Asn) + L-glutamine + ATP + H2O = L-asparaginyl-tRNA(Asn) + L-glutamate + ADP + phosphate + 2 H(+). Its function is as follows. Allows the formation of correctly charged Asn-tRNA(Asn) or Gln-tRNA(Gln) through the transamidation of misacylated Asp-tRNA(Asn) or Glu-tRNA(Gln) in organisms which lack either or both of asparaginyl-tRNA or glutaminyl-tRNA synthetases. The reaction takes place in the presence of glutamine and ATP through an activated phospho-Asp-tRNA(Asn) or phospho-Glu-tRNA(Gln). In Caldanaerobacter subterraneus subsp. tengcongensis (strain DSM 15242 / JCM 11007 / NBRC 100824 / MB4) (Thermoanaerobacter tengcongensis), this protein is Aspartyl/glutamyl-tRNA(Asn/Gln) amidotransferase subunit B.